We begin with the raw amino-acid sequence, 179 residues long: Inner membrane-spanning protein YciB (179 aa).

6 consecutive transmembrane segments (helical) span residues Phe-3–Tyr-23, Thr-24–His-44, Pro-49–His-69, Trp-76–Trp-96, Ala-121–Phe-141, and Phe-149–Leu-169.

The protein belongs to the YciB family.

It localises to the cell inner membrane. In terms of biological role, plays a role in cell envelope biogenesis, maintenance of cell envelope integrity and membrane homeostasis. This chain is Inner membrane-spanning protein YciB, found in Cupriavidus necator (strain ATCC 17699 / DSM 428 / KCTC 22496 / NCIMB 10442 / H16 / Stanier 337) (Ralstonia eutropha).